Reading from the N-terminus, the 148-residue chain is MVDWTDPERSAIVGLWGKISVDEIGPQALARLLIVSPWTQRHFSTFGNLSTPAAIMGNPAVAKHGKTVMHGLDRAVQNLDDIKNTYTALSVMHSEKLHVDPDNFRLLADCITVCVAAKLGPAVFSADTQEAFQKFLAVVVSALGRQYH.

In terms of domain architecture, Globin spans 3–148 (DWTDPERSAI…VVSALGRQYH (146 aa)). The heme b site is built by His64 and His93.

This sequence belongs to the globin family. As to quaternary structure, heterotetramer of two alpha chains and two beta chains. As to expression, red blood cells.

Involved in oxygen transport from gills to the various peripheral tissues. The sequence is that of Hemoglobin subunit beta-4 (hbb4) from Oncorhynchus mykiss (Rainbow trout).